A 362-amino-acid polypeptide reads, in one-letter code: Class I histocompatibility antigen, Gogo-B*0101 alpha chain (362 aa).

The signal sequence occupies residues 1 to 24 (MRVTAPRTLLLLLSAALALTETWA). Positions 25 to 114 (GSHSMRYFDT…ALRYYNQSEA (90 aa)) are alpha-1. The Extracellular segment spans residues 25 to 308 (GSHSMRYFDT…EPSSQSTIPI (284 aa)). N-linked (GlcNAc...) asparagine glycosylation occurs at N110. Residues 115–206 (GSHTIQRMFG…ENGRETLQRA (92 aa)) form an alpha-2 region. 2 disulfides stabilise this stretch: C125–C188 and C227–C283. Positions 207-298 (DTPKTHVTHH…GLPKPLTLRW (92 aa)) are alpha-3. Residues 209–295 (PKTHVTHHPI…QHEGLPKPLT (87 aa)) enclose the Ig-like C1-type domain. A connecting peptide region spans residues 299–308 (EPSSQSTIPI). A helical membrane pass occupies residues 309-332 (VGIVAGLAVLAVVVIGAVVTAVIC). The Cytoplasmic portion of the chain corresponds to 333–362 (RRKSSGGKGGSYSQAASSDSAQGSDVSLTA). Positions 335-362 (KSSGGKGGSYSQAASSDSAQGSDVSLTA) are disordered. Low complexity predominate over residues 343–362 (SYSQAASSDSAQGSDVSLTA). Phosphoserine is present on residues S356 and S359.

The protein belongs to the MHC class I family. As to quaternary structure, heterodimer of an alpha chain and a beta chain (beta-2-microglobulin).

The protein resides in the membrane. Involved in the presentation of foreign antigens to the immune system. This chain is Class I histocompatibility antigen, Gogo-B*0101 alpha chain, found in Gorilla gorilla gorilla (Western lowland gorilla).